Consider the following 996-residue polypeptide: KK-1 biosynthesis cluster protein D (996 aa).

Disordered stretches follow at residues His-307–Asp-333, Glu-425–Leu-449, Ala-489–Ala-556, and Ser-571–Ser-602. Polar residues-rich tracts occupy residues Pro-318–Gln-329 and Asn-428–Gln-439. Basic and acidic residues-rich tracts occupy residues Ser-440–Leu-449 and Arg-500–Ala-527. The segment covering Thr-572–Arg-590 has biased composition (polar residues).

Its pathway is secondary metabolite biosynthesis. Part of the gene cluster that mediates the biosynthesis of KK-1, a novel cyclic depsipeptide with 10 residues which is a promising active compound with high activity against many plant pathogens, especially Botrytis cinerea. The role of kk1D in KK-1 biosynthesis has still to be determined. The nonribosomal peptide synthetase (NRPS) kk1B catalyzes the elongation and cyclization of the decapeptide chain composed of 1 D-lactic acid residue (D-Lac), 1 pipecolic acid residue (Pip), 1 aspartic acid residue (Asp), 1 isoleucine residue (Ile), 1 glycine residue (Gly), 1 tyrosine residue (Tyr) and 4 valine residues (Val). The Asp, Ile and 3 Val residues are N-methylated by the 5 methyltransferase domains from the NRPS (found in modules 3, 5, 6, 7 and 9), whereas the Tyr residue is O-methylated by the cluster encoded O-methyltransferase kk1A. The thioesterase kk1J is likely to be involved in the corrective mechanism of peptide chain synthesis. The D-lactate dehydrogenase kk1H is involved in the synthesis of D-lactic acid from pyruvic acid, which is recognized by the A domain of the first kk1B module. The pyrroline-5-carboxylate reductase kk1I is involved in the synthesis of the L-pipecolic acid residue of KK-1 from delta-1-pyrroline-5-carboxylate (P5C), a metabolic intermediate of lysine. It is still unclear how kk1C and kk1D are involved in the production of KK-1. The chain is KK-1 biosynthesis cluster protein D from Curvularia clavata.